The chain runs to 414 residues: Probable mannose-1-phosphate guanyltransferase (414 aa).

It belongs to the transferase hexapeptide repeat family.

The protein resides in the cytoplasm. It is found in the nucleus. The enzyme catalyses alpha-D-mannose 1-phosphate + GTP + H(+) = GDP-alpha-D-mannose + diphosphate. It functions in the pathway nucleotide-sugar biosynthesis; GDP-alpha-D-mannose biosynthesis; GDP-alpha-D-mannose from alpha-D-mannose 1-phosphate (GTP route): step 1/1. In terms of biological role, involved in cell wall synthesis where it is required for glycosylation. The sequence is that of Probable mannose-1-phosphate guanyltransferase from Schizosaccharomyces pombe (strain 972 / ATCC 24843) (Fission yeast).